The primary structure comprises 1169 residues: Rabankyrin-5 (1169 aa).

Residue Ala-2 is modified to N-acetylalanine. The BTB domain maps to 68–130 (SDLKIKVGDR…IYTDELEFRE (63 aa)). 5 ANK repeats span residues 217-247 (KTEY…QLPG), 255-284 (NGDL…DVDM), 288-317 (NGWS…LVNA), 322-362 (AQET…NPNM), and 366-396 (KGRT…DLEL). Ser-270 carries the phosphoserine modification. The short motif at 421–423 (NPF) is the NPF element. ANK repeat units lie at residues 490-519 (WGET…NPNL), 542-572 (YLQT…ALHA), 588-617 (RDQT…SIND), 621-650 (DGQT…DINV), 654-683 (DGET…DMSV), 687-716 (KGNP…DATC), 724-753 (CLQT…DVNS), 769-798 (DGQT…NVNA), 802-832 (EGRT…ELSV), 836-865 (QGLT…GAAE), 870-899 (KGRN…NVNS), 905-934 (SKLT…KVNE), 938-967 (HRQT…DFAA), 971-1001 (NGNN…DAEA), 1005-1037 (RGQS…EYPL), and 1043-1072 (EGNT…RLGV). The interaction with RHOD and RAB5A stretch occupies residues 650 to 759 (VRTQDGETAL…DVNSPRQPGT (110 aa)). An FYVE-type zinc finger spans residues 1104–1164 (WCDGSNCYEC…VCNICFDVLT (61 aa)). Zn(2+)-binding residues include Cys-1110, Cys-1113, Cys-1126, Cys-1129, Cys-1134, Cys-1137, Cys-1156, and Cys-1159.

As to quaternary structure, interacts with RAB5A (in GTP-bound form). Interacts with RHOD (independent of GTP-loaded status). Interacts with EHD1. Interacts with VPS26A; the interaction is independent of EHD1 and is indicative for an association with the cargo recognition subcomplex of the retromer complex. In terms of tissue distribution, expressed in kidney proximal tubule epithelial cells; at protein level.

Its subcellular location is the cytoplasm. The protein localises to the endosome membrane. It is found in the cytoplasmic vesicle. Functionally, proposed effector of Rab5. Binds to phosphatidylinositol 3-phosphate (PI(3)P). Involved in homotypic early endosome fusion and to a lesser extent in heterotypic fusion of chlathrin-coated vesicles with early endosomes. Required for correct endosomal localization. Involved in the internalization and trafficking of activated tyrosine kinase receptors such as PDGFRB. Regulates the subcellular localization of the retromer complex in a EHD1-dependent manner. Involved in endosome-to-Golgi transport and biosynthetic transport to late endosomes and lysosomes indicative for a regulation of retromer complex-mediated retrograde transport. Involved in macropinocytosis; the function is dependent on Rab5-GTP. The chain is Rabankyrin-5 (Ankfy1) from Mus musculus (Mouse).